The chain runs to 326 residues: Acetyl-coenzyme A carboxylase carboxyl transferase subunit alpha (326 aa).

In terms of domain architecture, CoA carboxyltransferase C-terminal spans 46–300; sequence EIEARAAELR…KEALLRHLDE (255 aa).

It belongs to the AccA family. As to quaternary structure, acetyl-CoA carboxylase is a heterohexamer composed of biotin carboxyl carrier protein (AccB), biotin carboxylase (AccC) and two subunits each of ACCase subunit alpha (AccA) and ACCase subunit beta (AccD).

It localises to the cytoplasm. It carries out the reaction N(6)-carboxybiotinyl-L-lysyl-[protein] + acetyl-CoA = N(6)-biotinyl-L-lysyl-[protein] + malonyl-CoA. The protein operates within lipid metabolism; malonyl-CoA biosynthesis; malonyl-CoA from acetyl-CoA: step 1/1. Its function is as follows. Component of the acetyl coenzyme A carboxylase (ACC) complex. First, biotin carboxylase catalyzes the carboxylation of biotin on its carrier protein (BCCP) and then the CO(2) group is transferred by the carboxyltransferase to acetyl-CoA to form malonyl-CoA. The polypeptide is Acetyl-coenzyme A carboxylase carboxyl transferase subunit alpha (Gloeobacter violaceus (strain ATCC 29082 / PCC 7421)).